We begin with the raw amino-acid sequence, 202 residues long: Neurensin-2 (202 aa).

2 helical membrane-spanning segments follow: residues Val-65 to Val-85 and Val-116 to Ile-136. The interval Arg-162 to Leu-202 is disordered. Residues Phe-188–Leu-202 are compositionally biased toward polar residues.

This sequence belongs to the VMP family. Expressed specifically in brain where it is widely expressed, with highest levels of expression in thalamus and hypothalamus. In brain, found in neural cell bodies and detected in many regions of the limbic system, such as the septum nucleus, horizontal and vertical limbs of the diagonal band, hippocampus, amygdaloid nucleus, and habernula nucleus. Also localizes to small vesicles found in the perinuclear region of Neuro2a and PC12 cells.

It localises to the membrane. Its function is as follows. May play a role in maintenance and/or transport of vesicles. The chain is Neurensin-2 from Mus musculus (Mouse).